A 421-amino-acid chain; its full sequence is MHDAVTRPTPPSDATSWPRRQTHAVQIGGVTVGGGKPVVVQSMTNTDTSDVASSVKQVAELWRAGSEMVRLTVNTVEAAAAIPRIVDKLAMMGIDVPLIGDFHYNGHQLLTAEPACAEALAKYRINPGNVGFGKKKDLQFAQLIEFAIRYNKPVRIGANWGSLDQALAAKLMDENNHREQPWDAGRVLREALIRSALDSAEQAVEIGLPRDRIVLSAKVSGVQELIAVYRDLAQRSDFALHLGLTEAGIGSKGIVASSAALSVLLQEGIGDTIRISLTPEPGQSRTQEVIVAQELLQTTGQRAFTPLVTACPGCGRTTSEFFQELAKVVQSHVREKMPMWKIQHPGAENMTLAVMGCIVNGPGESRHANIGISLPGTGETPAAPVFVDGEKKVTLRGENIAQDFVALIDDYVERTYVRNAG.

The tract at residues Met-1–Arg-20 is disordered. [4Fe-4S] cluster contacts are provided by Cys-311, Cys-314, Cys-357, and Glu-364.

It belongs to the IspG family. Requires [4Fe-4S] cluster as cofactor.

The catalysed reaction is (2E)-4-hydroxy-3-methylbut-2-enyl diphosphate + oxidized [flavodoxin] + H2O + 2 H(+) = 2-C-methyl-D-erythritol 2,4-cyclic diphosphate + reduced [flavodoxin]. It functions in the pathway isoprenoid biosynthesis; isopentenyl diphosphate biosynthesis via DXP pathway; isopentenyl diphosphate from 1-deoxy-D-xylulose 5-phosphate: step 5/6. Functionally, converts 2C-methyl-D-erythritol 2,4-cyclodiphosphate (ME-2,4cPP) into 1-hydroxy-2-methyl-2-(E)-butenyl 4-diphosphate. The protein is 4-hydroxy-3-methylbut-2-en-1-yl diphosphate synthase (flavodoxin) of Stenotrophomonas maltophilia (strain R551-3).